The following is a 451-amino-acid chain: Probable glycine dehydrogenase (decarboxylating) subunit 1 (451 aa).

Belongs to the GcvP family. N-terminal subunit subfamily. In terms of assembly, the glycine cleavage system is composed of four proteins: P, T, L and H. In this organism, the P 'protein' is a heterodimer of two subunits.

The catalysed reaction is N(6)-[(R)-lipoyl]-L-lysyl-[glycine-cleavage complex H protein] + glycine + H(+) = N(6)-[(R)-S(8)-aminomethyldihydrolipoyl]-L-lysyl-[glycine-cleavage complex H protein] + CO2. Functionally, the glycine cleavage system catalyzes the degradation of glycine. The P protein binds the alpha-amino group of glycine through its pyridoxal phosphate cofactor; CO(2) is released and the remaining methylamine moiety is then transferred to the lipoamide cofactor of the H protein. This is Probable glycine dehydrogenase (decarboxylating) subunit 1 from Staphylococcus aureus (strain MSSA476).